Consider the following 304-residue polypeptide: HTH-type transcriptional regulator BenM (304 aa).

Residues 1–58 (MELRHLRYFVAVVEEQSFTKAADKLCIAQPPLSRQIQNLEEELGIQLLERGSRPVKTT) form the HTH lysR-type domain. A DNA-binding region (H-T-H motif) is located at residues 18 to 37 (FTKAADKLCIAQPPLSRQIQ). Benzoate is bound by residues Ser-99 and Leu-104. Ser-99 lines the cis,cis-muconate pocket. Thr-128 contributes to the cis,cis-muconate binding site. 3 residues coordinate benzoate: Phe-144, Arg-160, and Asn-202. Phe-203 is a cis,cis-muconate binding site. Tyr-293 lines the benzoate pocket.

The protein belongs to the LysR transcriptional regulatory family. As to quaternary structure, homotetramer; dimer of dimers. The dimers can also associate to form linear, higher oligomers (in vitro).

In terms of biological role, positive regulator of the ben and cat genes for benzoate degradation. BenM is necessary for ben gene expression but not for expression of the cat genes, which can be regulated by CatM. Binds to the inducers cis,cis-muconate and benzoate. In Acinetobacter baylyi (strain ATCC 33305 / BD413 / ADP1), this protein is HTH-type transcriptional regulator BenM (benM).